The chain runs to 740 residues: D-ornithine 4,5-aminomutase subunit beta (740 aa).

Substrate contacts are provided by residues glutamate 81, tyrosine 160, histidine 182, and 294–296 (RAQ). Positions 602-739 (PLKIVAATVG…VKKRREMREG (138 aa)) constitute a B12-binding domain. Residues 614–616 (EHS) and histidine 615 each bind adenosylcob(III)alamin. An N6-(pyridoxal phosphate)lysine modification is found at lysine 626. Residues 664-669 (STIISH), threonine 700, and serine 720 contribute to the adenosylcob(III)alamin site.

Heterotetramer of 2 alpha (OraS) and 2 beta (OraE) subunits. Adenosylcob(III)alamin serves as cofactor. It depends on pyridoxal 5'-phosphate as a cofactor.

The catalysed reaction is D-ornithine = (2R,4S)-2,4-diaminopentanoate. Increased activity in the presence of dithiothreitol (DTT) in vitro. Inhibited by 1 mM potassium phosphate and potassium chloride. Inhibited by L-alpha-ornithine, D,L-alpha-lysine, L-beta-lysine (50%-60%), L-alpha-lysine (26%) and by delta-amino-n-valeric acid to a lesser extent. Significant decrease in activity is observed in the presence of 0.2 mM p-chloromercuribenzoate, N-ethylmaleimide and also by 2 mM iodoacetate to a lesser extent but not inhibited by arsenite. Functionally, component of a complex that catalyzes the reversible migration of the omega amino group of D-ornithine to C-4 to form (2R,4S)-2,4-diaminopentanoic acid. OraE may be the catalytic subunit. Active only on D-ornithine and 2,4-diaminopentanoic acid but not active on L-ornithine, L-beta-lysine, L-alpha-lysine or D-alpha-lysine. The chain is D-ornithine 4,5-aminomutase subunit beta (oraE) from Acetoanaerobium sticklandii (strain ATCC 12662 / DSM 519 / JCM 1433 / CCUG 9281 / NCIMB 10654 / HF) (Clostridium sticklandii).